A 307-amino-acid polypeptide reads, in one-letter code: Pantothenate kinase (307 aa).

87-94 (GSVAVGKS) lines the ATP pocket.

Belongs to the prokaryotic pantothenate kinase family.

It localises to the cytoplasm. The enzyme catalyses (R)-pantothenate + ATP = (R)-4'-phosphopantothenate + ADP + H(+). It functions in the pathway cofactor biosynthesis; coenzyme A biosynthesis; CoA from (R)-pantothenate: step 1/5. The chain is Pantothenate kinase from Vibrio vulnificus (strain YJ016).